Consider the following 239-residue polypeptide: Small ribosomal subunit protein uS3 (239 aa).

One can recognise a KH type-2 domain in the interval 39–107; that stretch reads VRQVLRKKMS…SVHINVIEVR (69 aa). The segment at 214 to 239 is disordered; that stretch reads GQEKQDDGSRGDRNADRSSRRSREVR. Positions 216–239 are enriched in basic and acidic residues; the sequence is EKQDDGSRGDRNADRSSRRSREVR.

This sequence belongs to the universal ribosomal protein uS3 family. In terms of assembly, part of the 30S ribosomal subunit. Forms a tight complex with proteins S10 and S14.

Its function is as follows. Binds the lower part of the 30S subunit head. Binds mRNA in the 70S ribosome, positioning it for translation. This is Small ribosomal subunit protein uS3 from Xylella fastidiosa (strain M12).